We begin with the raw amino-acid sequence, 537 residues long: Zinc finger and BTB domain-containing protein 18 (537 aa).

Residues 24–91 (CDSTVLVGDA…MYEGKLQFKS (68 aa)) form the BTB domain. Residues 122-143 (TAEADSTKREEDTSSCSDKVES) are compositionally biased toward basic and acidic residues. Disordered regions lie at residues 122 to 232 (TAEA…RVSA) and 335 to 355 (ASEL…LGGD). Low complexity-rich tracts occupy residues 182–195 (RLPS…TTSP) and 208–229 (SPAG…ASRR). 4 consecutive C2H2-type zinc fingers follow at residues 385 to 407 (FMCP…LSTH), 425 to 447 (PTCS…ERTH), 453 to 475 (YTCT…AVVH), and 481 to 504 (HACK…RKFH).

It belongs to the krueppel C2H2-type zinc-finger protein family. ZBTB18 subfamily.

The protein localises to the nucleus. In terms of biological role, transcriptional repressor that plays a role in various developmental processes. Specifically binds the consensus DNA sequence 5'-[AC]ACATCTG[GT][AC]-3' which contains the E box core, and acts by recruiting chromatin remodeling multiprotein complexes. This is Zinc finger and BTB domain-containing protein 18 (zbtb18) from Danio rerio (Zebrafish).